We begin with the raw amino-acid sequence, 161 residues long: 3-hydroxyacyl-[acyl-carrier-protein] dehydratase FabZ (161 aa).

Residue H64 is part of the active site.

The protein belongs to the thioester dehydratase family. FabZ subfamily.

Its subcellular location is the cytoplasm. The catalysed reaction is a (3R)-hydroxyacyl-[ACP] = a (2E)-enoyl-[ACP] + H2O. Involved in unsaturated fatty acids biosynthesis. Catalyzes the dehydration of short chain beta-hydroxyacyl-ACPs and long chain saturated and unsaturated beta-hydroxyacyl-ACPs. The chain is 3-hydroxyacyl-[acyl-carrier-protein] dehydratase FabZ from Paramagnetospirillum magneticum (strain ATCC 700264 / AMB-1) (Magnetospirillum magneticum).